The following is a 59-amino-acid chain: Protein B3 (59 aa).

This Homo sapiens (Human) protein is Protein B3 (B3).